A 533-amino-acid polypeptide reads, in one-letter code: Probable polyamine oxidase 5 (533 aa).

Positions 37, 45, 262, and 501 each coordinate FAD.

This sequence belongs to the flavin monoamine oxidase family. FAD is required as a cofactor. Expressed in root vasculature, leaves and stems.

Its subcellular location is the cytoplasm. The catalysed reaction is spermine + O2 + H2O = 3-aminopropanal + spermidine + H2O2. It catalyses the reaction N(1)-acetylspermine + O2 + H2O = 3-acetamidopropanal + spermidine + H2O2. It carries out the reaction norspermine + O2 + H2O = norspermidine + 3-aminopropanal + H2O2. The enzyme catalyses thermospermine + O2 + H2O = 3-aminopropanal + spermidine + H2O2. It participates in amine and polyamine degradation; spermine degradation. In terms of biological role, flavoenzyme involved in polyamine back-conversion. Catalyzes the oxidation of the secondary amino group of polyamines, such as spermine and its acetyl derivatives. Substrate preference is spermine &gt; N(1)-acetylspermine &gt; thermospermine &gt; norspermine. Plays an important role in the regulation of polyamine intracellular concentration. Involved in xylem differentiation by controlling thermospermine homeostasis, and participating in the tightly controlled interplay between auxin and cytokinin that is necessary for proper xylem differentiation. Involved in the production of hydrogen peroxide in response to salt and cold stresses. This chain is Probable polyamine oxidase 5, found in Arabidopsis thaliana (Mouse-ear cress).